Reading from the N-terminus, the 278-residue chain is TnpB-like protein MJ0751 (278 aa).

Zn(2+) contacts are provided by C222, C225, C239, and C242.

This sequence in the N-terminal section; belongs to the transposase 2 family. In the C-terminal section; belongs to the transposase 35 family.

The sequence is that of TnpB-like protein MJ0751 from Methanocaldococcus jannaschii (strain ATCC 43067 / DSM 2661 / JAL-1 / JCM 10045 / NBRC 100440) (Methanococcus jannaschii).